The chain runs to 617 residues: Secretogranin-2 (617 aa).

The signal sequence occupies residues 1–27 (MAEAKTHWLGAALSLIPLIFLISGAEA). The propeptide occupies 28-30 (ASF). The segment at 120–143 (QAENEPQSAPKENKPYALNSEKNF) is disordered. Tyr151 is subject to Sulfotyrosine. The residue at position 174 (Ser174) is a Phosphoserine. Positions 182–200 (TNEIVEEQYTPQSLATLES) are O-glycosylated at one site. Composition is skewed to basic and acidic residues over residues 257–284 (IESQ…EMKR) and 293–302 (EDLRKESKDQ). Residues 257–302 (IESQTQEEVRDSKENIEKNEQINDEMKRSGQLGIQEEDLRKESKDQ) form a disordered region. Ser268 carries the post-translational modification Phosphoserine. Phosphoserine is present on residues Ser432, Ser532, Ser555, and Ser556. Residues 552–583 (NQGSSQETDKLAPVSKRFPVGPPKNDDTPNRQ) are disordered.

This sequence belongs to the chromogranin/secretogranin protein family. In terms of assembly, interacts with Secretogranin III/SCG3. Post-translationally, O-glycosylated.

It is found in the secreted. Neuroendocrine protein of the granin family that regulates the biogenesis of secretory granules. The chain is Secretogranin-2 (SCG2) from Homo sapiens (Human).